Consider the following 340-residue polypeptide: Phosphate acyltransferase (340 aa).

Belongs to the PlsX family. In terms of assembly, homodimer. Probably interacts with PlsY.

It localises to the cytoplasm. It carries out the reaction a fatty acyl-[ACP] + phosphate = an acyl phosphate + holo-[ACP]. It participates in lipid metabolism; phospholipid metabolism. In terms of biological role, catalyzes the reversible formation of acyl-phosphate (acyl-PO(4)) from acyl-[acyl-carrier-protein] (acyl-ACP). This enzyme utilizes acyl-ACP as fatty acyl donor, but not acyl-CoA. The chain is Phosphate acyltransferase from Nostoc punctiforme (strain ATCC 29133 / PCC 73102).